A 186-amino-acid chain; its full sequence is Elongation factor P (186 aa).

The protein belongs to the elongation factor P family.

It localises to the cytoplasm. Its pathway is protein biosynthesis; polypeptide chain elongation. Its function is as follows. Involved in peptide bond synthesis. Stimulates efficient translation and peptide-bond synthesis on native or reconstituted 70S ribosomes in vitro. Probably functions indirectly by altering the affinity of the ribosome for aminoacyl-tRNA, thus increasing their reactivity as acceptors for peptidyl transferase. This Streptococcus mutans serotype c (strain ATCC 700610 / UA159) protein is Elongation factor P.